A 979-amino-acid polypeptide reads, in one-letter code: Pimaradiene synthase pbcA (979 aa).

The VYDTAW motif signature appears at 34-39; the sequence is VYDTAW. Positions 328–331 match the DXDD B-type cyclization motif motif; the sequence is DADD. Mg(2+)-binding residues include Asp665, Glu669, Asn865, Asp866, Ser869, and Asp873. A DEXXE A-type cyclization motif motif is present at residues 665–669; that stretch reads DEFME.

The protein belongs to the terpene synthase family. Requires Mg(2+) as cofactor.

The catalysed reaction is (2E,6E,10E)-geranylgeranyl diphosphate = ent-copalyl diphosphate. It catalyses the reaction ent-copalyl diphosphate = ent-pimara-8(14),15-diene + diphosphate. It participates in secondary metabolite biosynthesis; terpenoid biosynthesis. In terms of biological role, bifunctional terpene synthase; part of the gene cluster that mediates the biosynthesis of the diterpene ent-pimara-8(14),15-diene (PD). Within the cluster, the HMG-CoA reductase AN1593 functions in the mevalonate pathway, which produces isoprenoid precursors. The geranylgeranyl pyrophosphate (GGPP) synthase AN1592 is needed in the formation of GGPP, the precursor for diterpenes. Lastly, the pimaradiene synthase pbcA performs the 2 cyclization steps that convert GGPP to ent-pimara-8(14),15-diene with ent-copalyl diphosphate as an intermediate. The putative roles of the remaining cluster enzymes in ent-pimara-8(14),15-diene biosynthesis is unclear. The cytochrome P450 monooxygenase AN1598, the glutathione S-transferase AN1595, the oxidoreductases AN1596 and AN1597 probably function as decorative enzymes. It is possible that in biological conditions the compound is oxidized to ent-pimara-8(14),15-dien-19-oic acid, which is a bioactive diterpene compound predominant in many plant extracts. This Emericella nidulans (strain FGSC A4 / ATCC 38163 / CBS 112.46 / NRRL 194 / M139) (Aspergillus nidulans) protein is Pimaradiene synthase pbcA.